We begin with the raw amino-acid sequence, 151 residues long: 3-hydroxyacyl-[acyl-carrier-protein] dehydratase FabZ (151 aa).

His-49 is a catalytic residue.

It belongs to the thioester dehydratase family. FabZ subfamily.

The protein localises to the cytoplasm. It carries out the reaction a (3R)-hydroxyacyl-[ACP] = a (2E)-enoyl-[ACP] + H2O. Functionally, involved in unsaturated fatty acids biosynthesis. Catalyzes the dehydration of short chain beta-hydroxyacyl-ACPs and long chain saturated and unsaturated beta-hydroxyacyl-ACPs. The sequence is that of 3-hydroxyacyl-[acyl-carrier-protein] dehydratase FabZ from Bordetella bronchiseptica (strain ATCC BAA-588 / NCTC 13252 / RB50) (Alcaligenes bronchisepticus).